Consider the following 461-residue polypeptide: Photosystem II CP43 reaction center protein (461 aa).

The propeptide occupies 1 to 2; the sequence is ME. T3 bears the N-acetylthreonine mark. T3 is modified (phosphothreonine). The next 5 helical transmembrane spans lie at 57 to 81, 122 to 143, 166 to 188, 243 to 263, and 279 to 300; these read LFEV…PHLA, LLGP…KDRN, KALY…RKIT, KPFA…LSYS, and WFNN…ASQA. [CaMn4O5] cluster is bound at residue E355. A helical membrane pass occupies residues 435–459; sequence RARAAAAGFEKGIDRDLEPVLFMTP.

It belongs to the PsbB/PsbC family. PsbC subfamily. As to quaternary structure, PSII is composed of 1 copy each of membrane proteins PsbA, PsbB, PsbC, PsbD, PsbE, PsbF, PsbH, PsbI, PsbJ, PsbK, PsbL, PsbM, PsbT, PsbX, PsbY, PsbZ, Psb30/Ycf12, at least 3 peripheral proteins of the oxygen-evolving complex and a large number of cofactors. It forms dimeric complexes. Requires Binds multiple chlorophylls and provides some of the ligands for the Ca-4Mn-5O cluster of the oxygen-evolving complex. It may also provide a ligand for a Cl- that is required for oxygen evolution. PSII binds additional chlorophylls, carotenoids and specific lipids. as cofactor.

It is found in the plastid. It localises to the chloroplast thylakoid membrane. In terms of biological role, one of the components of the core complex of photosystem II (PSII). It binds chlorophyll and helps catalyze the primary light-induced photochemical processes of PSII. PSII is a light-driven water:plastoquinone oxidoreductase, using light energy to abstract electrons from H(2)O, generating O(2) and a proton gradient subsequently used for ATP formation. This chain is Photosystem II CP43 reaction center protein, found in Nandina domestica (Heavenly bamboo).